We begin with the raw amino-acid sequence, 88 residues long: MAKGQSLQDPFLNALRCERIPVSIYLVNGIKLQGQIESFDQFVILLKNTVNQMVYKHAISTVVPARAVSHHTASDRPQGERPQETTEE.

One can recognise a Sm domain in the interval 9–68; it reads DPFLNALRCERIPVSIYLVNGIKLQGQIESFDQFVILLKNTVNQMVYKHAISTVVPARAV. Residues 66–88 form a disordered region; that stretch reads RAVSHHTASDRPQGERPQETTEE. Residues 72-88 show a composition bias toward basic and acidic residues; it reads TASDRPQGERPQETTEE.

The protein belongs to the Hfq family. In terms of assembly, homohexamer.

RNA chaperone that binds small regulatory RNA (sRNAs) and mRNAs to facilitate mRNA translational regulation in response to envelope stress, environmental stress and changes in metabolite concentrations. Also binds with high specificity to tRNAs. The chain is RNA-binding protein Hfq from Aliivibrio salmonicida (strain LFI1238) (Vibrio salmonicida (strain LFI1238)).